Here is a 1226-residue protein sequence, read N- to C-terminus: 3-hydroxy-3-methylglutaryl-coenzyme A reductase (1226 aa).

The next 5 helical transmembrane spans lie at 17 to 37 (IETIVSVFVLATLAYFHILSG), 224 to 244 (ILVVLTGYILMHVTFMRLFLA), 252 to 272 (FWLSAGIFSSATISFLFTLPM), 337 to 357 (VGNMILRDYALEIAVLFVGVN), and 373 to 393 (LLAMDRLMTFTLYTAVLTIMV). Residues 223 to 391 (DILVVLTGYI…FTLYTAVLTI (169 aa)) enclose the SSD domain. Residues 428–449 (LSRKSSKQSVTEPETTKNLRQR) are disordered. Residues 434-445 (KQSVTEPETTKN) are compositionally biased toward polar residues. A helical transmembrane segment spans residues 481–501 (LLLIASFLTLHILNFCTTLTS). Disordered stretches follow at residues 683–702 (APAPAPAPEPEPPVNRPPPL) and 722–742 (LPIRSPPPVEPITPESREVEP). A compositionally biased stretch (pro residues) spans 685 to 702 (APAPAPEPEPPVNRPPPL). Residue Glu-869 is the Charge relay system of the active site. CoA is bound at residue 875 to 881 (STSRGCK). Residues 936 to 938 (SRF) and 963 to 971 (DAMGMNMIS) each bind NADP(+). Lys-1001 acts as the Charge relay system in catalysis. 1030–1032 (VLK) lines the CoA pocket. Asp-1077 functions as the Charge relay system in the catalytic mechanism. The helical transmembrane segment at 1150–1170 (IIASAVMAGELSLISALAAGH) threads the bilayer. 1174–1175 (AH) provides a ligand contact to CoA. The active-site Proton donor is His-1175. 1179 to 1180 (NR) provides a ligand contact to NADP(+). The disordered stretch occupies residues 1182 to 1226 (QLNTPMPSRPHTPGPEDVSHVQQLPTPSASDDKGVTAQGYVVEAK). The span at 1201–1210 (HVQQLPTPSA) shows a compositional bias: polar residues.

This sequence belongs to the HMG-CoA reductase family.

It localises to the endoplasmic reticulum membrane. The catalysed reaction is (R)-mevalonate + 2 NADP(+) + CoA = (3S)-3-hydroxy-3-methylglutaryl-CoA + 2 NADPH + 2 H(+). Its pathway is metabolic intermediate biosynthesis; (R)-mevalonate biosynthesis; (R)-mevalonate from acetyl-CoA: step 3/3. Functionally, HMG-CoA reductase; part of the first module of ergosterol biosynthesis pathway that includes the early steps of the pathway, conserved across all eukaryotes, and which results in the formation of mevalonate from acetyl-coenzyme A (acetyl-CoA). This module also plays a key role in the biosynthesis of triterpenes such as ganoderic acids (GA), a group of highly oxygenated lanostane-type triterpenoids which are well recognized as a main group of unique bioactive compounds in the medicinal mushroom Ganoderma lucidum. In this module, the acetyl-CoA acetyltransferase catalyzes the formation of acetoacetyl-CoA. The hydroxymethylglutaryl-CoA synthase HMGS then condenses acetyl-CoA with acetoacetyl-CoA to form HMG-CoA. The rate-limiting step of the early module is the reduction to mevalonate by the 3-hydroxy-3-methylglutaryl-coenzyme A (HMG-CoA) reductase. This is 3-hydroxy-3-methylglutaryl-coenzyme A reductase from Ganoderma lucidum (Ling zhi medicinal fungus).